A 1155-amino-acid polypeptide reads, in one-letter code: RHO1 GDP-GTP exchange protein 1 (1155 aa).

At Met-1 the chain carries N-acetylmethionine. Over residues 100 to 143 the composition is skewed to polar residues; sequence NSSPQSFTGDQISPTNKKISINDSTRQDKGNSCTTTSSPSQKRS. Residues 100 to 249 are disordered; the sequence is NSSPQSFTGD…HSRSKSSPVS (150 aa). Residues Ser-154 and Ser-155 each carry the phosphoserine modification. The span at 155–167 shows a compositional bias: low complexity; the sequence is SPSLLSFSKNSGS. The residue at position 180 (Thr-180) is a Phosphothreonine. Positions 190 to 227 are enriched in low complexity; that stretch reads LHSSFNGKHSSSSTSSLFALESLKTQNRRSSNSSNHSS. Positions 228–243 are enriched in basic residues; sequence QYRRHTNQHQRHHSRS. Ser-433 carries the phosphoserine modification. Residues 464–651 enclose the DH domain; the sequence is KRQEAIYELF…KDLMKRIDRA (188 aa). The 296-residue stretch at 842–1137 folds into the CNH domain; it reads TNRVNDVLIC…RMLKSYAKKI (296 aa).

Functionally, stimulates the exchange of RHO1 GDP-bound form into GTP-bound form. The sequence is that of RHO1 GDP-GTP exchange protein 1 (ROM1) from Saccharomyces cerevisiae (strain ATCC 204508 / S288c) (Baker's yeast).